A 595-amino-acid polypeptide reads, in one-letter code: Pectinesterase 5 (595 aa).

The N-terminal stretch at 1 to 24 (MIGKVVVSVASILLIVGVAIGVVA) is a signal peptide. Asparagine 86 and asparagine 206 each carry an N-linked (GlcNAc...) asparagine glycan. Residues 215–239 (SDKGAAPVNKGTPPVADDSPVADPD) are disordered. The span at 227–239 (PPVADDSPVADPD) shows a compositional bias: low complexity. The short motif at 243–246 (RRLL) is the RRLL cleavage motif element. Positions 263–266 (RKLM) match the RKLM cleavage motif motif. Asparagine 349 carries N-linked (GlcNAc...) asparagine glycosylation. 2 residues coordinate substrate: threonine 360 and glutamine 390. Aspartate 413 acts as the Proton donor in catalysis. Aspartate 434 serves as the catalytic Nucleophile. 2 residues coordinate substrate: arginine 503 and tryptophan 505.

In the N-terminal section; belongs to the PMEI family. It in the C-terminal section; belongs to the pectinesterase family. In terms of assembly, interacts with SBT6.1. Expressed in pollen grains and pollen tubes.

The protein localises to the cell membrane. The protein resides in the secreted. It localises to the cell wall. It is found in the golgi apparatus membrane. It catalyses the reaction [(1-&gt;4)-alpha-D-galacturonosyl methyl ester](n) + n H2O = [(1-&gt;4)-alpha-D-galacturonosyl](n) + n methanol + n H(+). Its pathway is glycan metabolism; pectin degradation; 2-dehydro-3-deoxy-D-gluconate from pectin: step 1/5. In terms of biological role, acts in the modification of cell walls via demethylesterification of cell wall pectin. Plays an important role in growth of pollen tubes in female floral tissues, possibly via enhancing the interaction between the pollen tube and female floral tissues by modification of the cell walls. May be regulated by MYB80 during anther development and play a role in tapetum and pollen development. This chain is Pectinesterase 5 (PME5), found in Arabidopsis thaliana (Mouse-ear cress).